We begin with the raw amino-acid sequence, 393 residues long: Dual specificity mitogen-activated protein kinase kinase 1 (393 aa).

The interval 1-27 is disordered; it reads MPKKKPTPIQLNPAPDGSAVNGTSSAE. Positions 68 to 361 constitute a Protein kinase domain; that stretch reads FEKISELGAG…LKQLMVHAFI (294 aa). ATP-binding positions include 74-82 and lysine 97; that span reads LGAGNGGVV. Aspartate 190 acts as the Proton acceptor in catalysis. Serine 218 and serine 222 each carry phosphoserine; by RAF. Residues 270 to 307 are RAF1-binding; sequence ELELLFGCQVEGDAAETPPRPRTPGRPLSSYGMDSRPP. Threonine 286 carries the phosphothreonine modification. Phosphothreonine; by MAPK1 is present on threonine 292. Residue serine 298 is modified to Phosphoserine; by PAK.

It belongs to the protein kinase superfamily. STE Ser/Thr protein kinase family. MAP kinase kinase subfamily. As to quaternary structure, found in a complex with at least BRAF, HRAS, MAP2K1, MAPK3/ERK1 and RGS14. Forms a heterodimer with MAP2K2/MEK2. Forms heterodimers with KSR2 which further dimerize to form tetramers. Interacts with KSR1 or KSR2 and BRAF; the interaction with KSR1 or KSR2 mediates KSR1-BRAF or KSR2-BRAF dimerization. Interacts with ARBB2, LAMTOR3, MAPK1/ERK2 and RAF1. Interacts with MAPK1/ERK2. Interacts with MORG1. Interacts with PPARG. Interacts with VRK2. Interacts with SGK1. Interacts with BIRC6/bruce. Interacts with KAT7; the interaction promotes KAT7 phosphorylation. Interacts with RAF1 and NEK10; the interaction is required for ERK1/2-signaling pathway activation in response to UV irradiation. Interacts with TRAF3IP3. Interacts with MOS. Post-translationally, phosphorylation at Ser-218 and Ser-222 by MAP kinase kinase kinases (BRAF or MEKK1) positively regulates kinase activity. Also phosphorylated at Thr-292 by MAPK1/ERK2 and at Ser-298 by PAK. MAPK1/ERK2 phosphorylation of Thr-292 occurs in response to cellular adhesion and leads to inhibition of Ser-298 phosphorylation by PAK. Autophosphorylated at Ser-218 and Ser-222, autophosphosphorylation is promoted by NEK10 following UV irradiation.

It is found in the cytoplasm. The protein localises to the cytoskeleton. It localises to the microtubule organizing center. The protein resides in the centrosome. Its subcellular location is the spindle pole body. It is found in the nucleus. The protein localises to the membrane. The enzyme catalyses L-seryl-[protein] + ATP = O-phospho-L-seryl-[protein] + ADP + H(+). The catalysed reaction is L-threonyl-[protein] + ATP = O-phospho-L-threonyl-[protein] + ADP + H(+). It carries out the reaction L-tyrosyl-[protein] + ATP = O-phospho-L-tyrosyl-[protein] + ADP + H(+). Its activity is regulated as follows. Ras proteins such as HRAS mediate the activation of RAF proteins such as RAF1 or BRAF which in turn activate extracellular signal-regulated kinases (ERK) through MAPK (mitogen-activated protein kinases) and ERK kinases MAP2K1/MEK1 and MAP2K2/MEK2. Activation occurs through phosphorylation of Ser-218 and Ser-222. MAP2K1/MEK1 binds KSR1 or KSR2 releasing the inhibitory intramolecular interaction between KSR1 or KSR2 protein kinase and N-terminal domains. This allows KSR1 or KSR2 dimerization with BRAF leading to BRAF activation and phosphorylation of MAP2K1. MAP2K1/MEK1 is also the target of negative feed-back regulation by its substrate kinases, such as MAPK1/ERK2. These phosphorylate MAP2K1/MEK1 on Thr-292, thereby facilitating dephosphorylation of the activating residues Ser-218 and Ser-222. Inhibited by serine/threonine phosphatase 2A. Dual specificity protein kinase which acts as an essential component of the MAP kinase signal transduction pathway. Binding of extracellular ligands such as growth factors, cytokines and hormones to their cell-surface receptors activates RAS and this initiates RAF1 activation. RAF1 then further activates the dual-specificity protein kinases MAP2K1/MEK1 and MAP2K2/MEK2. Both MAP2K1/MEK1 and MAP2K2/MEK2 function specifically in the MAPK/ERK cascade, and catalyze the concomitant phosphorylation of a threonine and a tyrosine residue in a Thr-Glu-Tyr sequence located in the extracellular signal-regulated kinases MAPK3/ERK1 and MAPK1/ERK2, leading to their activation and further transduction of the signal within the MAPK/ERK cascade. Activates BRAF in a KSR1 or KSR2-dependent manner; by binding to KSR1 or KSR2 releases the inhibitory intramolecular interaction between KSR1 or KSR2 protein kinase and N-terminal domains which promotes KSR1 or KSR2-BRAF dimerization and BRAF activation. Depending on the cellular context, this pathway mediates diverse biological functions such as cell growth, adhesion, survival and differentiation, predominantly through the regulation of transcription, metabolism and cytoskeletal rearrangements. One target of the MAPK/ERK cascade is peroxisome proliferator-activated receptor gamma (PPARG), a nuclear receptor that promotes differentiation and apoptosis. MAP2K1/MEK1 has been shown to export PPARG from the nucleus. The MAPK/ERK cascade is also involved in the regulation of endosomal dynamics, including lysosome processing and endosome cycling through the perinuclear recycling compartment (PNRC), as well as in the fragmentation of the Golgi apparatus during mitosis. The protein is Dual specificity mitogen-activated protein kinase kinase 1 of Rattus norvegicus (Rat).